The sequence spans 387 residues: Probable serine protease FE772_23060 (387 aa).

This sequence belongs to the peptidase S1 family.

In terms of biological role, possibly a dedicated protease for substrate gasdermin bGSDM; cleaves the bGSDM precursor, releasing the pore-forming moiety, which integrates into the membrane and triggers cell death. Involved in defense against bacteriophages. When this probable 4 gene operon (bGSDM-FE772_23060-FE772_23065-FE772_23070) is inserted into E.coli it provides nearly 100-fold protection against phages T5 and T6 and about 8-fold against phage T4. The operon without bGSDM no longer protects against phage. The chain is Probable serine protease FE772_23060 from Lysobacter enzymogenes.